Here is a 466-residue protein sequence, read N- to C-terminus: 3-isopropylmalate dehydratase large subunit (466 aa).

[4Fe-4S] cluster contacts are provided by Cys347, Cys407, and Cys410.

The protein belongs to the aconitase/IPM isomerase family. LeuC type 1 subfamily. Heterodimer of LeuC and LeuD. [4Fe-4S] cluster is required as a cofactor.

It catalyses the reaction (2R,3S)-3-isopropylmalate = (2S)-2-isopropylmalate. The protein operates within amino-acid biosynthesis; L-leucine biosynthesis; L-leucine from 3-methyl-2-oxobutanoate: step 2/4. Functionally, catalyzes the isomerization between 2-isopropylmalate and 3-isopropylmalate, via the formation of 2-isopropylmaleate. This chain is 3-isopropylmalate dehydratase large subunit, found in Shewanella halifaxensis (strain HAW-EB4).